The sequence spans 225 residues: UPF0758 protein Ping_0056 (225 aa).

An MPN domain is found at 103–225; sequence ALTSAAQTKA…CTSFAENGWI (123 aa). 3 residues coordinate Zn(2+): histidine 174, histidine 176, and aspartate 187. The JAMM motif motif lies at 174–187; it reads HNHPSGDPSASEAD.

The protein belongs to the UPF0758 family.

This Psychromonas ingrahamii (strain DSM 17664 / CCUG 51855 / 37) protein is UPF0758 protein Ping_0056.